The sequence spans 636 residues: MTVSKILKQVINRKTTRQIVIAQLGLGSLASLKQLIIEQLQLISDHRVTLKIFSQIEPNLHTFISDTELAELFSSKPNTSLSLAAIEGCQRIIVNDGKLKIDFHLGSYAQQLQQLPIVSSGFIDGWNMADNLAQEQLDSALFWQMAKLAHNDCLFCLEPTLTPEAQQQSLLLAEQVGLYSELPLKNDDTLFQERAALRAQSHQQQAPFPICPAALTPVENDIGIAIIGGGVASACLALSLAERDQRVTLFCEDDALAQAASGNKQGAIYPLLTPDNNTLSQYFQQAYLFSLQRLKTLAARGHKIDFDLCGVVHTGHDERSRKRVAKITHGHNWEPNIALAIAAEQASNIAGVKLDDGGLFYPQGGWVSPQDFTRAAFNQAQAISDASLKLNTQITGIHSKDNVWYLSSKTERFGPFKALIVANGKSITQYPQTQYLQATGFRGQVSHVPSRAKLSKLSAVLCAHGYMTPSNNDLHCLGASYVKNAADTRYSPSEQVENLHKIQHSYIGQDWIEDIDVSGHSARVDVRMVTRDHAPMMGPVPNLDAILALYQQHQLTPESRQFWQTHAAPTHKNLYVLGGLGSRGLCSGPLAAEALAAQICGEPMPISLDFVSLLNPNRMWMRKLLKGKALEMSGKS.

The segment at 1-202 (MTVSKILKQV…ERAALRAQSH (202 aa)) is tRNA (mnm(5)s(2)U34)-methyltransferase. The tract at residues 227–636 (IGGGVASACL…GKALEMSGKS (410 aa)) is FAD-dependent cmnm(5)s(2)U34 oxidoreductase.

This sequence in the N-terminal section; belongs to the methyltransferase superfamily. tRNA (mnm(5)s(2)U34)-methyltransferase family. In the C-terminal section; belongs to the DAO family. FAD serves as cofactor.

The protein localises to the cytoplasm. It carries out the reaction 5-aminomethyl-2-thiouridine(34) in tRNA + S-adenosyl-L-methionine = 5-methylaminomethyl-2-thiouridine(34) in tRNA + S-adenosyl-L-homocysteine + H(+). Functionally, catalyzes the last two steps in the biosynthesis of 5-methylaminomethyl-2-thiouridine (mnm(5)s(2)U) at the wobble position (U34) in tRNA. Catalyzes the FAD-dependent demodification of cmnm(5)s(2)U34 to nm(5)s(2)U34, followed by the transfer of a methyl group from S-adenosyl-L-methionine to nm(5)s(2)U34, to form mnm(5)s(2)U34. This is tRNA 5-methylaminomethyl-2-thiouridine biosynthesis bifunctional protein MnmC from Shewanella halifaxensis (strain HAW-EB4).